Consider the following 178-residue polypeptide: CASP-like protein 4D1 (178 aa).

Residues 1-14 are Cytoplasmic-facing; that stretch reads MAPPPPSPPSVTLR. The chain crosses the membrane as a helical span at residues 15 to 35; that stretch reads TVLLLLRVLTAAFLVITVVLI. Over 36 to 60 the chain is Extracellular; it reads STNTVTLEVSSTSIKMRFNDVYAYR. A helical membrane pass occupies residues 61–81; sequence YMLSAAVIGLLYAVVQLFLTI. The Cytoplasmic segment spans residues 82 to 149; it reads SQFATGTTHP…KFFSKGYASA (68 aa). The chain crosses the membrane as a helical span at residues 150–170; sequence SLLLFAFVSLAVLSVFSSLAL. The Extracellular segment spans residues 171-178; sequence SKRPIQVS.

This sequence belongs to the Casparian strip membrane proteins (CASP) family. Homodimer and heterodimers.

It localises to the cell membrane. The protein is CASP-like protein 4D1 of Arabidopsis lyrata subsp. lyrata (Lyre-leaved rock-cress).